The primary structure comprises 235 residues: Casparian strip membrane protein 2 (235 aa).

The Cytoplasmic segment spans residues 1-70; the sequence is MTSESATVIQ…RSGAEGFRRC (70 aa). A helical transmembrane segment spans residues 71-91; sequence LAVIDFLLRVAAFGPTLAAAI. Over 92 to 118 the chain is Extracellular; that stretch reads STGTADERLSVFTNFFQFHARFDDFPA. The chain crosses the membrane as a helical span at residues 119 to 139; sequence FTFFLVANAVAAGYLVLSLPF. The Cytoplasmic segment spans residues 140–162; it reads SVVVILRPNKATGGVRLLLLLCD. The chain crosses the membrane as a helical span at residues 163–183; it reads VLIMALLTAAGAAAAAIVYVA. The Extracellular portion of the chain corresponds to 184 to 210; it reads HSGNRRANWVPICMQFHGFCQRTSGSV. Residues 211-231 form a helical membrane-spanning segment; that stretch reads VATFLAVLVFIVLILMAACVI. The Cytoplasmic portion of the chain corresponds to 232–235; sequence RRSK.

This sequence belongs to the Casparian strip membrane proteins (CASP) family. In terms of assembly, homodimer and heterodimers.

It localises to the cell membrane. Regulates membrane-cell wall junctions and localized cell wall deposition. Required for establishment of the Casparian strip membrane domain (CSD) and the subsequent formation of Casparian strips, a cell wall modification of the root endodermis that determines an apoplastic barrier between the intraorganismal apoplasm and the extraorganismal apoplasm and prevents lateral diffusion. This is Casparian strip membrane protein 2 from Sorghum bicolor (Sorghum).